We begin with the raw amino-acid sequence, 349 residues long: Phosphoribosylformylglycinamidine cyclo-ligase (349 aa).

This sequence belongs to the AIR synthase family.

The protein resides in the cytoplasm. It carries out the reaction 2-formamido-N(1)-(5-O-phospho-beta-D-ribosyl)acetamidine + ATP = 5-amino-1-(5-phospho-beta-D-ribosyl)imidazole + ADP + phosphate + H(+). It participates in purine metabolism; IMP biosynthesis via de novo pathway; 5-amino-1-(5-phospho-D-ribosyl)imidazole from N(2)-formyl-N(1)-(5-phospho-D-ribosyl)glycinamide: step 2/2. This is Phosphoribosylformylglycinamidine cyclo-ligase from Bordetella pertussis (strain Tohama I / ATCC BAA-589 / NCTC 13251).